A 76-amino-acid chain; its full sequence is EMBRYO SURROUNDING FACTOR 1-like protein 8 (76 aa).

The signal sequence occupies residues 1–22 (MSSSQFFILCIILISSFPLHEC). 4 disulfides stabilise this stretch: cysteine 38/cysteine 54, cysteine 43/cysteine 74, cysteine 52/cysteine 70, and cysteine 55/cysteine 63.

The protein belongs to the MEG family. In terms of tissue distribution, expressed in flowers.

This is EMBRYO SURROUNDING FACTOR 1-like protein 8 (ESFL8) from Arabidopsis thaliana (Mouse-ear cress).